The primary structure comprises 528 residues: Glutamyl-tRNA(Gln) amidotransferase subunit A, mitochondrial (528 aa).

The Charge relay system role is filled by Lys76. A disordered region spans residues 147 to 166 (QYREKRKQNPHSKNEDSDWL). Ser171 (charge relay system) is an active-site residue. Ser195 (acyl-ester intermediate) is an active-site residue.

The protein belongs to the amidase family. GatA subfamily. In terms of assembly, subunit of the heterotrimeric GatCAB amidotransferase (AdT) complex, composed of A (QRSL1), B (GATB) and C (GATC) subunits.

It is found in the mitochondrion. It carries out the reaction L-glutamyl-tRNA(Gln) + L-glutamine + ATP + H2O = L-glutaminyl-tRNA(Gln) + L-glutamate + ADP + phosphate + H(+). Its function is as follows. Allows the formation of correctly charged Gln-tRNA(Gln) through the transamidation of misacylated Glu-tRNA(Gln) in the mitochondria. The reaction takes place in the presence of glutamine and ATP through an activated gamma-phospho-Glu-tRNA(Gln). The sequence is that of Glutamyl-tRNA(Gln) amidotransferase subunit A, mitochondrial from Macaca fascicularis (Crab-eating macaque).